The sequence spans 191 residues: Fe/S biogenesis protein NfuA (191 aa).

The [4Fe-4S] cluster site is built by Cys149 and Cys152.

It belongs to the NfuA family. In terms of assembly, homodimer. It depends on [4Fe-4S] cluster as a cofactor.

In terms of biological role, involved in iron-sulfur cluster biogenesis. Binds a 4Fe-4S cluster, can transfer this cluster to apoproteins, and thereby intervenes in the maturation of Fe/S proteins. Could also act as a scaffold/chaperone for damaged Fe/S proteins. The polypeptide is Fe/S biogenesis protein NfuA (Pseudoalteromonas translucida (strain TAC 125)).